The chain runs to 237 residues: Lectin (237 aa).

N-linked (GlcNAc...) asparagine glycosylation is present at Asn-69. The residue at position 106 (Ile-106) is a Blocked amino end (Ile). Positions 115 and 117 each coordinate Mn(2+). 4 residues coordinate Ca(2+): Asp-117, Tyr-120, Asn-122, and Asp-127. Mn(2+) is bound by residues Asp-127 and His-132.

The protein belongs to the leguminous lectin family. As to quaternary structure, tetramer of two alpha and two beta chains. The N-terminus of alpha chain is blocked. The alpha and beta chains are produced by proteolytic processing, with probably the loss of intervening amino acid(s).

D-mannose/D-glucose-binding lectin. Requires Ca(2+) and Mn(2+) ions for full activity. This Lablab purpureus (Hyacinth bean) protein is Lectin.